We begin with the raw amino-acid sequence, 505 residues long: ATP synthase subunit alpha (505 aa).

169–176 (GDRQTGKT) contributes to the ATP binding site.

The protein belongs to the ATPase alpha/beta chains family. F-type ATPases have 2 components, CF(1) - the catalytic core - and CF(0) - the membrane proton channel. CF(1) has five subunits: alpha(3), beta(3), gamma(1), delta(1), epsilon(1). CF(0) has three main subunits: a(1), b(2) and c(9-12). The alpha and beta chains form an alternating ring which encloses part of the gamma chain. CF(1) is attached to CF(0) by a central stalk formed by the gamma and epsilon chains, while a peripheral stalk is formed by the delta and b chains.

The protein localises to the cell membrane. The catalysed reaction is ATP + H2O + 4 H(+)(in) = ADP + phosphate + 5 H(+)(out). Its function is as follows. Produces ATP from ADP in the presence of a proton gradient across the membrane. The alpha chain is a regulatory subunit. The sequence is that of ATP synthase subunit alpha from Alkaliphilus metalliredigens (strain QYMF).